Consider the following 391-residue polypeptide: Phosphoglycerate kinase (391 aa).

Substrate-binding positions include 21–23, arginine 36, 59–62, arginine 113, and arginine 146; these read DLN and HLGR. Residues lysine 197, glutamate 319, and 345–348 contribute to the ATP site; that span reads GGDT.

This sequence belongs to the phosphoglycerate kinase family. As to quaternary structure, monomer.

It localises to the cytoplasm. It catalyses the reaction (2R)-3-phosphoglycerate + ATP = (2R)-3-phospho-glyceroyl phosphate + ADP. It participates in carbohydrate degradation; glycolysis; pyruvate from D-glyceraldehyde 3-phosphate: step 2/5. In Shewanella sp. (strain ANA-3), this protein is Phosphoglycerate kinase.